The chain runs to 122 residues: Basic phospholipase A2 10 (122 aa).

7 disulfide bridges follow: Cys26-Cys114, Cys28-Cys43, Cys42-Cys94, Cys48-Cys122, Cys49-Cys87, Cys56-Cys80, and Cys74-Cys85. Residues Tyr27, Gly29, and Gly31 each coordinate Ca(2+). His46 is an active-site residue. Residue Asp47 coordinates Ca(2+). Asp88 is a catalytic residue.

Ca(2+) serves as cofactor. In terms of tissue distribution, expressed by the venom gland.

It is found in the secreted. It catalyses the reaction a 1,2-diacyl-sn-glycero-3-phosphocholine + H2O = a 1-acyl-sn-glycero-3-phosphocholine + a fatty acid + H(+). Inhibited by chemical modifications mediated by p-BPB, anhydrous acetic acid and NBSF. Snake venom phospholipase A2 (PLA2) that has a strong dose-dependent anticoagulant effect. In vivo, intramuscular and intervenal injection causes muscle necrosis. Induces moderate edema in the mouse foot pad. PLA2 catalyzes the calcium-dependent hydrolysis of the 2-acyl groups in 3-sn-phosphoglycerides. This Crotalus durissus cumanensis (South American rattlesnake) protein is Basic phospholipase A2 10.